Reading from the N-terminus, the 292-residue chain is MNFQEMILALQKYWSKQGCIMMQPYDIEKGAGTMNPNTFLRSLGPEPWQVCYVEPSRRPADGRYGENPNRLYQHHQFQVILKPSPDNIQELYLESLKEIGIDPSEHDIRFVEDNWEAATVGAWGLGWEVWLDGMEITQFTYFQQVGNIECELETGEITYGLERLAMYIQEVDSVYDLKWNDKITYGEVFNKAEYENSMYAFELCDADMLFNLFDIYEKEALRLMENGLVIPSYDYVLKCSHAFNTLDARGAIGVSQRASFIGRVRNMAKTVAETFVKQREEMGFPLLKDGDK.

The protein belongs to the class-II aminoacyl-tRNA synthetase family. In terms of assembly, tetramer of two alpha and two beta subunits.

It is found in the cytoplasm. The catalysed reaction is tRNA(Gly) + glycine + ATP = glycyl-tRNA(Gly) + AMP + diphosphate. The sequence is that of Glycine--tRNA ligase alpha subunit from Clostridioides difficile (strain 630) (Peptoclostridium difficile).